A 354-amino-acid polypeptide reads, in one-letter code: MAELKNDRYLRALLKQPVDVTPVWMMRQAGRYLPEYRATRAQAGDFMSLCKNAELACEVTLQPLRRYELDAAILFSDILTIPDAMGLGLYFEAGEGPRFERKADTLEAIKALPIPDPEDELGYVMRAVSTIRRELKGEVPLIGFSGSPWTLATYMVEGGSSKAFEKIKRMMYSEPMALHLLLDKLADSVILYLNAQIANGAQSVMIFDSWGGALSHSAYREFSLRYMQKIVDGLTREADGRKVPVTLFTKGGGLWLESMAETGCDALGLDWTVDIADARRRVGHKVALQGNMDPSMLYAPIPRIEEEVEQILAGFGEGTGHVFNLGHGIHQHVDPEHAGAFIKAVHEKSRKYHK.

Residues 27 to 31 (RQAGR), aspartate 77, tyrosine 154, serine 209, and histidine 327 contribute to the substrate site.

This sequence belongs to the uroporphyrinogen decarboxylase family. As to quaternary structure, homodimer.

It localises to the cytoplasm. The catalysed reaction is uroporphyrinogen III + 4 H(+) = coproporphyrinogen III + 4 CO2. The protein operates within porphyrin-containing compound metabolism; protoporphyrin-IX biosynthesis; coproporphyrinogen-III from 5-aminolevulinate: step 4/4. Catalyzes the decarboxylation of four acetate groups of uroporphyrinogen-III to yield coproporphyrinogen-III. The sequence is that of Uroporphyrinogen decarboxylase from Shewanella amazonensis (strain ATCC BAA-1098 / SB2B).